Consider the following 287-residue polypeptide: Pyridoxal kinase PdxY (287 aa).

Residues Ser-10 and 45 to 46 (TQ) each bind substrate. ATP-binding positions include Asp-112, Ala-144, Glu-149, Lys-182, and 209-212 (RPLV). Asp-224 lines the substrate pocket.

It belongs to the pyridoxine kinase family. PdxY subfamily. Homodimer. It depends on Mg(2+) as a cofactor.

It carries out the reaction pyridoxal + ATP = pyridoxal 5'-phosphate + ADP + H(+). It functions in the pathway cofactor metabolism; pyridoxal 5'-phosphate salvage; pyridoxal 5'-phosphate from pyridoxal: step 1/1. Pyridoxal kinase involved in the salvage pathway of pyridoxal 5'-phosphate (PLP). Catalyzes the phosphorylation of pyridoxal to PLP. The chain is Pyridoxal kinase PdxY from Shigella dysenteriae serotype 1 (strain Sd197).